Consider the following 422-residue polypeptide: MRNDKIFEESKLYMPGGVNSPVRAFKDVPLNPPVIKKGRGAYIYDEDGNEYIDFVCSWGPMILGHCDEDVVNAIKYTSENAISFGATTKIELELSKYICTTMDNIEMIRMVNSGTEATMSAVKLARGYTRRNKIIKFSGCYHGHFDDFLVEAGSGVMTEGIPGSAGVPKDSIKNTIIAEYNNLEDVKNIFNKYGSDTAAIIVEPVAGNMGVIPGRIDFLKGLRKLCDEYGSLLIFDEVMSGFRVAYKGAQSLYGIKPDITTMAKIMGGGLPCGAYGGRKDIMENLSPLGPVYQAGTMSGNPIVMAAGLATLKKLNENPDYYVKLEKLGKKLEKGIKQISKDKNIPMVINRCGAMFSIFFTSDSEVKNYKDARKCDTTIFAKFFQHMLERGIYIAPSQFEAIFLNVKHTEEHIDKFLQAVNTF.

Lys-264 carries the post-translational modification N6-(pyridoxal phosphate)lysine.

Belongs to the class-III pyridoxal-phosphate-dependent aminotransferase family. HemL subfamily. In terms of assembly, homodimer. It depends on pyridoxal 5'-phosphate as a cofactor.

The protein localises to the cytoplasm. The enzyme catalyses (S)-4-amino-5-oxopentanoate = 5-aminolevulinate. The protein operates within porphyrin-containing compound metabolism; protoporphyrin-IX biosynthesis; 5-aminolevulinate from L-glutamyl-tRNA(Glu): step 2/2. The sequence is that of Glutamate-1-semialdehyde 2,1-aminomutase from Clostridium kluyveri (strain ATCC 8527 / DSM 555 / NBRC 12016 / NCIMB 10680 / K1).